The primary structure comprises 168 residues: Photosystem I assembly protein Ycf3 (168 aa).

TPR repeat units follow at residues 35-68 (AFTYYRDGISAQSEGNYAEALQNYYEAMRLEIDP), 72-105 (SYILYNIGLIHTSNGEHTKALEYYFRALERNSFL), and 120-153 (GEQAIRQGDSEIAEAWFDQAAEYWKQAIALTPGN).

The protein belongs to the Ycf3 family.

It is found in the plastid. The protein resides in the chloroplast thylakoid membrane. Functionally, essential for the assembly of the photosystem I (PSI) complex. May act as a chaperone-like factor to guide the assembly of the PSI subunits. The protein is Photosystem I assembly protein Ycf3 of Jasminum nudiflorum (Winter jasmine).